Consider the following 355-residue polypeptide: Tyrosine recombinase XerC (355 aa).

Residues 4-89 (TQFDGDIDSF…AVRGFFAWAY (86 aa)) enclose the Core-binding (CB) domain. A disordered region spans residues 138-180 (DDGGAAAASGSGKAAGKTADKSADTVNRSEAPARADKRDNARV). Residues 141-154 (GAAAASGSGKAAGK) are compositionally biased toward low complexity. A Tyr recombinase domain is found at 158–349 (KSADTVNRSE…SIEQLKNRYG (192 aa)). Positions 168–178 (APARADKRDNA) are enriched in basic and acidic residues. Catalysis depends on residues R200, K224, H301, R304, and H327. Catalysis depends on Y336, which acts as the O-(3'-phospho-DNA)-tyrosine intermediate.

This sequence belongs to the 'phage' integrase family. XerC subfamily. Forms a cyclic heterotetrameric complex composed of two molecules of XerC and two molecules of XerD.

It localises to the cytoplasm. Site-specific tyrosine recombinase, which acts by catalyzing the cutting and rejoining of the recombining DNA molecules. The XerC-XerD complex is essential to convert dimers of the bacterial chromosome into monomers to permit their segregation at cell division. It also contributes to the segregational stability of plasmids. The chain is Tyrosine recombinase XerC from Bifidobacterium longum subsp. infantis (strain ATCC 15697 / DSM 20088 / JCM 1222 / NCTC 11817 / S12).